The sequence spans 594 residues: CRISPR-associated DNA-binding protein Cas12m (594 aa).

The recognition domain (REC1-N) stretch occupies residues Met1 to Glu85. Positions Ser86–Lys153 are recognition domain (REC2). Positions Gln154 to Gly211 are recognition domain (REC1-C). The wedge domain (WED) stretch occupies residues Lys212–Ile314. Residues Leu315 to Thr329 form a linker region. The interval Ala330–Pro540 is ruvC-I. The interval Ala541–Asp575 is target nucleic-acid binding (TNB). The Zn(2+) site is built by Cys548, Cys551, Cys567, and Cys570. The segment at Gln576–Lys594 is ruvC-II. Asp577 is a binding site for Mg(2+).

This sequence belongs to the CRISPR-associated DNA-binding protein Cas12m family. Mg(2+) is required as a cofactor. Requires Zn(2+) as cofactor.

Functionally, CRISPR (clustered regularly interspaced short palindromic repeat), is an adaptive immune system that provides protection against mobile genetic elements (viruses, transposable elements and conjugative plasmids). CRISPR clusters contain sequences complementary to antecedent mobile elements and target invading nucleic acids. CRISPR clusters are transcribed and processed into CRISPR RNA (crRNA). Recognizes a short motif in the CRISPR repeat sequences (the 5' PAM or protospacer adjacent motif, 5'-C/TCN-3' in this organism) to help distinguish self versus nonself, as targets within the bacterial CRISPR locus do not have PAMs. Upon expression in E.coli as a CRISPR locus inhibits plasmid propagation when targeted to regions essential for plasmid propagation (replication origin but not a selectable marker), probably by inhibiting transcription. Cas12m-crRNA binds DNA in a PAM-dependent, crRNA-guided fashion. Upon expression in E.coli as a CRISPR region preferentially binds to its associated crRNA. Probably required for pre-crRNA processing to mature crRNA. The polypeptide is CRISPR-associated DNA-binding protein Cas12m (Thermanaerosceptrum fracticalcis).